The chain runs to 373 residues: Chaperone protein DnaJ (373 aa).

Positions 5-70 (DYYEVLGLQK…EKKSNYDQFG (66 aa)) constitute a J domain. A CR-type zinc finger spans residues 132–214 (GVEKEITVNR…CRGNGNVRKT (83 aa)). Cys-145, Cys-148, Cys-162, Cys-165, Cys-188, Cys-191, Cys-202, and Cys-205 together coordinate Zn(2+). 4 CXXCXGXG motif repeats span residues 145–152 (CEHCNGSG), 162–169 (CPTCSGTG), 188–195 (CDRCSGTG), and 202–209 (CTHCRGNG).

It belongs to the DnaJ family. Homodimer. It depends on Zn(2+) as a cofactor.

It localises to the cytoplasm. In terms of biological role, participates actively in the response to hyperosmotic and heat shock by preventing the aggregation of stress-denatured proteins and by disaggregating proteins, also in an autonomous, DnaK-independent fashion. Unfolded proteins bind initially to DnaJ; upon interaction with the DnaJ-bound protein, DnaK hydrolyzes its bound ATP, resulting in the formation of a stable complex. GrpE releases ADP from DnaK; ATP binding to DnaK triggers the release of the substrate protein, thus completing the reaction cycle. Several rounds of ATP-dependent interactions between DnaJ, DnaK and GrpE are required for fully efficient folding. Also involved, together with DnaK and GrpE, in the DNA replication of plasmids through activation of initiation proteins. The polypeptide is Chaperone protein DnaJ (Clostridium botulinum (strain Alaska E43 / Type E3)).